A 303-amino-acid chain; its full sequence is MIIFSGGTGTPKLLDGLKEILPEEELTVVVNTAEDLWVSGNLISPDLDTVLYLFSDQIDRKRWWGIENDTFGTYERMKELGIEEGLKLGDRDRATHIIRSNIIRDGASLTDSTVKLSSLFGIKANILPMSDDPVSTYIETAEGIMHFQDFWIGKRGEPDVRGVDIRGVSEASISPKVLEAFEKEENILIGPSNPITSIGPIISLPGMRELLKKKKVVAVSPIIGNAPVSGPAGKLMPACGIEVSSMGVAEYYQDFLDVFVFDERDRADEFAFERLGCHASRADTLMTSTEKSKELAEIVVQAF.

2 residues coordinate 7,8-didemethyl-8-hydroxy-5-deazariboflavin: Asp48 and Lys87.

This sequence belongs to the CofD family. As to quaternary structure, homodimer. Mg(2+) serves as cofactor.

It carries out the reaction (2S)-lactyl-2-diphospho-5'-guanosine + 7,8-didemethyl-8-hydroxy-5-deazariboflavin = oxidized coenzyme F420-0 + GMP + H(+). Its pathway is cofactor biosynthesis; coenzyme F420 biosynthesis. Functionally, catalyzes the transfer of the 2-phospholactate moiety from (2S)-lactyl-2-diphospho-5'-guanosine to 7,8-didemethyl-8-hydroxy-5-deazariboflavin (FO) with the formation of oxidized coenzyme F420-0 and GMP. This chain is 2-phospho-L-lactate transferase, found in Methanosarcina mazei (strain ATCC BAA-159 / DSM 3647 / Goe1 / Go1 / JCM 11833 / OCM 88) (Methanosarcina frisia).